Here is a 463-residue protein sequence, read N- to C-terminus: UDP-N-acetylmuramoylalanine--D-glutamate ligase (463 aa).

ATP is bound at residue 126 to 132 (GSNGKST).

Belongs to the MurCDEF family.

Its subcellular location is the cytoplasm. It carries out the reaction UDP-N-acetyl-alpha-D-muramoyl-L-alanine + D-glutamate + ATP = UDP-N-acetyl-alpha-D-muramoyl-L-alanyl-D-glutamate + ADP + phosphate + H(+). Its pathway is cell wall biogenesis; peptidoglycan biosynthesis. Cell wall formation. Catalyzes the addition of glutamate to the nucleotide precursor UDP-N-acetylmuramoyl-L-alanine (UMA). This Idiomarina loihiensis (strain ATCC BAA-735 / DSM 15497 / L2-TR) protein is UDP-N-acetylmuramoylalanine--D-glutamate ligase.